Reading from the N-terminus, the 339-residue chain is UDP-N-acetylenolpyruvoylglucosamine reductase (339 aa).

Residues 18–189 form the FAD-binding PCMH-type domain; that stretch reads GVEVKAKWFA…LRVRFALNRV (172 aa). R166 is a catalytic residue. The active-site Proton donor is S239. The active site involves E335.

The protein belongs to the MurB family. FAD is required as a cofactor.

The protein resides in the cytoplasm. It carries out the reaction UDP-N-acetyl-alpha-D-muramate + NADP(+) = UDP-N-acetyl-3-O-(1-carboxyvinyl)-alpha-D-glucosamine + NADPH + H(+). The protein operates within cell wall biogenesis; peptidoglycan biosynthesis. In terms of biological role, cell wall formation. This Pseudomonas fluorescens (strain ATCC BAA-477 / NRRL B-23932 / Pf-5) protein is UDP-N-acetylenolpyruvoylglucosamine reductase.